The following is a 341-amino-acid chain: tRNA N6-adenosine threonylcarbamoyltransferase (341 aa).

Fe cation contacts are provided by histidine 115 and histidine 119. Substrate contacts are provided by residues 137–141, aspartate 170, glycine 183, aspartate 187, and asparagine 276; that span reads IVSGG. Fe cation is bound at residue aspartate 304.

It belongs to the KAE1 / TsaD family. The cofactor is Fe(2+).

It localises to the cytoplasm. The enzyme catalyses L-threonylcarbamoyladenylate + adenosine(37) in tRNA = N(6)-L-threonylcarbamoyladenosine(37) in tRNA + AMP + H(+). Its function is as follows. Required for the formation of a threonylcarbamoyl group on adenosine at position 37 (t(6)A37) in tRNAs that read codons beginning with adenine. Is involved in the transfer of the threonylcarbamoyl moiety of threonylcarbamoyl-AMP (TC-AMP) to the N6 group of A37, together with TsaE and TsaB. TsaD likely plays a direct catalytic role in this reaction. This Staphylococcus aureus (strain Mu3 / ATCC 700698) protein is tRNA N6-adenosine threonylcarbamoyltransferase.